We begin with the raw amino-acid sequence, 63 residues long: Cytochrome c oxidase subunit 7C, mitochondrial (63 aa).

Residues 1-16 (MLGQSIRRFTTSVVRR) constitute a mitochondrion transit peptide. Over 17–34 (SHYEEGPGKNLPFSVENK) the chain is Mitochondrial matrix. N6-acetyllysine; alternate is present on lysine 25. Residue lysine 25 is modified to N6-succinyllysine; alternate. The chain crosses the membrane as a helical span at residues 35–57 (WRLLAMMTVYFGSGFAAPFFIVR). Over 58-63 (HQLLKK) the chain is Mitochondrial intermembrane.

This sequence belongs to the cytochrome c oxidase VIIc family. Component of the cytochrome c oxidase (complex IV, CIV), a multisubunit enzyme composed of 14 subunits. The complex is composed of a catalytic core of 3 subunits MT-CO1, MT-CO2 and MT-CO3, encoded in the mitochondrial DNA, and 11 supernumerary subunits COX4I, COX5A, COX5B, COX6A, COX6B, COX6C, COX7A, COX7B, COX7C, COX8 and NDUFA4, which are encoded in the nuclear genome. The complex exists as a monomer or a dimer and forms supercomplexes (SCs) in the inner mitochondrial membrane with NADH-ubiquinone oxidoreductase (complex I, CI) and ubiquinol-cytochrome c oxidoreductase (cytochrome b-c1 complex, complex III, CIII), resulting in different assemblies (supercomplex SCI(1)III(2)IV(1) and megacomplex MCI(2)III(2)IV(2)). Interacts with RAB5IF.

It localises to the mitochondrion inner membrane. The protein operates within energy metabolism; oxidative phosphorylation. Its function is as follows. Component of the cytochrome c oxidase, the last enzyme in the mitochondrial electron transport chain which drives oxidative phosphorylation. The respiratory chain contains 3 multisubunit complexes succinate dehydrogenase (complex II, CII), ubiquinol-cytochrome c oxidoreductase (cytochrome b-c1 complex, complex III, CIII) and cytochrome c oxidase (complex IV, CIV), that cooperate to transfer electrons derived from NADH and succinate to molecular oxygen, creating an electrochemical gradient over the inner membrane that drives transmembrane transport and the ATP synthase. Cytochrome c oxidase is the component of the respiratory chain that catalyzes the reduction of oxygen to water. Electrons originating from reduced cytochrome c in the intermembrane space (IMS) are transferred via the dinuclear copper A center (CU(A)) of subunit 2 and heme A of subunit 1 to the active site in subunit 1, a binuclear center (BNC) formed by heme A3 and copper B (CU(B)). The BNC reduces molecular oxygen to 2 water molecules using 4 electrons from cytochrome c in the IMS and 4 protons from the mitochondrial matrix. In Mus musculus (Mouse), this protein is Cytochrome c oxidase subunit 7C, mitochondrial (Cox7c).